The chain runs to 1136 residues: Solute carrier family 12 member 2 (1136 aa).

Disordered regions lie at residues 1–73 and 91–121; these read MSAS…SVSG and PDAA…QQHH. The Cytoplasmic portion of the chain corresponds to 1 to 208; the sequence is MSASPPISAG…SESKGVVKFG (208 aa). Phosphothreonine is present on residues T125, T129, T134, T139, and T152. Residues 209–234 traverse the membrane as a discontinuously helical segment; it reads WIKGVLVRCMLNIWGVMLFIRMTWIV. L219 provides a ligand contact to Na(+). K(+)-binding residues include N220 and I221. W222 provides a ligand contact to Na(+). Chloride contacts are provided by G223, V224, and M225. At 235 to 238 the chain is on the extracellular side; sequence GQAG. A helical membrane pass occupies residues 239–261; sequence IAYSCIIVIMATVVTTITGCSTS. Residues 262–285 lie on the Cytoplasmic side of the membrane; it reads AIATNGFVRGGGAYYLISRSLGPE. The chain crosses the membrane as a helical span at residues 286 to 314; it reads FGGSIGLIFAFANAVAVAMYVVGFAETVV. F294 is a chloride binding site. Residue Y305 participates in K(+) binding. The Extracellular portion of the chain corresponds to 315 to 327; it reads ELLMDSGLLMIDQ. The next 2 helical transmembrane spans lie at 328 to 351 and 352 to 376; these read TNDI…AGME and WEAK…IGSF. Topologically, residues 377 to 407 are extracellular; it reads IAVDSKKKFGFFSYDAGILAENFGPDFRGQT. The chain crosses the membrane as a discontinuously helical span at residues 408-427; that stretch reads FFSVFSIFFPAATGILAGAN. Residues P417, A418, and T420 each coordinate K(+). Positions 417 and 418 each coordinate chloride. G421 and I422 together coordinate chloride. Topologically, residues 428 to 438 are cytoplasmic; the sequence is ISGDLADPQMA. A helical transmembrane segment spans residues 439–462; that stretch reads IPKGTLLAILITGLVYVGVAISAG. Residues 463-523 lie on the Extracellular side of the membrane; it reads ACIVRDATGI…DFQVMSVVSG (61 aa). N-linked (GlcNAc...) asparagine glycosylation is found at N475 and N481. Cysteines 496 and 507 form a disulfide. Residues 524 to 551 form a helical membrane-spanning segment; that stretch reads FSPLISAGIFSATLSSALASLVSAPKVF. Na(+) is bound by residues A535, S538, and S539. Topologically, residues 552–576 are cytoplasmic; that stretch reads QALCKDNIYPGIAIFGKGYGKNNEP. The next 2 helical transmembrane spans lie at 577–595 and 596–619; these read LRGY…LIAE and LNVI…FSVF. Residues F607 and Y611 each contribute to the chloride site. The Cytoplasmic portion of the chain corresponds to 620–636; the sequence is HASLANSPGWRPSFKYY. Transmembrane regions (helical) follow at residues 637–656 and 657–672; these read NMWA…FIIN and WWAA…SLYI. Over 673–1136 the chain is Cytoplasmic; that stretch reads YVSYKKPDVN…NHQSVLTFYS (464 aa). The tract at residues 689 to 702 is scissor helix; sequence ALTYHQALTHSLQL. A disordered region spans residues 875-921; that stretch reads SKDSDGDSSKPSSKATSVQNSPAVQKDEDDDGKAHTQPLLKKDKKSP. The residue at position 1059 (T1059) is a Phosphothreonine.

This sequence belongs to the SLC12A transporter family. In terms of assembly, homodimer; adopts a domain-swap conformation at the scissor helices connecting the transmembrane domain and C-terminal domain. In terms of processing, phosphorylated at Thr-125, Thr-129 and Thr-134 by OXSR1/OSR1 and STK39/SPAK downstream of WNK kinases (WNK1, WNK2, WNK3 or WNK4), promoting its activity.

It is found in the basolateral cell membrane. It catalyses the reaction K(+)(out) + 2 chloride(out) + Na(+)(out) = K(+)(in) + 2 chloride(in) + Na(+)(in). With respect to regulation, activated following phosphorylation by OXSR1/OSR1 and STK39/SPAK. Inhibited by bumetanide. In terms of biological role, cation-chloride cotransporter which mediates the electroneutral transport of chloride, potassium and/or sodium ions across the membrane. Plays a vital role in the regulation of ionic balance and cell volume. Important for maintenance of endolymph volume in the otic vesicle, probably by regulating ion homeostasis. Also plays a role in normal development of the swim bladder. This chain is Solute carrier family 12 member 2, found in Danio rerio (Zebrafish).